The primary structure comprises 509 residues: Heat shock 70 kDa protein 14 (509 aa).

The protein belongs to the heat shock protein 70 family. Component of ribosome-associated complex (RAC), a heterodimer composed of Hsp70/DnaK-type chaperone HSPA14 and Hsp40/DnaJ-type chaperone DNAJC2.

The protein localises to the cytoplasm. It localises to the cytosol. Functionally, component of the ribosome-associated complex (RAC), a complex involved in folding or maintaining nascent polypeptides in a folding-competent state. In the RAC complex, binds to the nascent polypeptide chain, while DNAJC2 stimulates its ATPase activity. This chain is Heat shock 70 kDa protein 14 (HSPA14), found in Homo sapiens (Human).